Reading from the N-terminus, the 589-residue chain is MKRVRTEQVQVAVSCYLKRRQYVDSEGPLKQGLRLSQTPEEMAANLTVQSESGCANAVSAAPCQAEPQQYEVQFGRLRSFLTDSDSQYSREVMPLLYPLFVYLHLNLVQSGPKSTVESFYSRFHGMFLQNASQKDVIEQLQTTQTIQDILSNFQLRAFLDNKYVVRLQEDSYNYLIRYLQSDNNTALCKVLAVHIHLDVQPAKRTDYQLYASGGSSRTENSSLEPPEVPSPILQNEAALEVLQESIKRVKDGPPSLTTICFYAFYNTEQLLNTAEISSDSKLLAAGFDNSCIKLWSLRSKKLKSEPHHVDTSRIRLACDTLEEEENEEDNTGTEMKILRGHCGPVYSTRFLADSSGLLSCSEDMSIRYWDLGSFTNTVLYQGHAYPVWDVDISPFSLYFASGSHDRTARLWSFDRTYPLRIYAGHLADVDCVKFHPNSNYLATGSTDKTVRLWSAQQGNSVRLFTGHRGPVLSLSFSPNGKYLASAGEDQRLKLWDLASGTLFKELRGHTDSITSLAFSPDSGLIASASMDNSVRVWDIRSTCCNTPADGSSGELVGVYTGQMSNVLSVQFMACNLLLVTGITQENQEH.

WD repeat units follow at residues 266–305, 340–379, 382–421, 424–463, 466–505, and 508–547; these read NTEQ…LKSE, GHCG…NTVL, GHAY…PLRI, GHLA…SVRL, GHRG…LFKE, and GHTD…CNTP.

The protein belongs to the WD repeat TAF5 family. As to quaternary structure, the PCAF complex is composed of a number of TBP-associated factors (TAFS), such as TAF5, TAF5L, TAF6, TAF6L, TAF9, TAF10 and TAF12, PCAF, and also PCAF-associated factors (PAFs), such as TADA2L/ADA2, TADA3L/ADA3 and SPT3. Component of the STAGA transcription coactivator-HAT complex, at least composed of SUPT3H, GCN5L2, TAF5L, TAF6L, SUPT7L, TADA3L, TAD1L, TAF10, TAF12, TRRAP and TAF9.

The protein resides in the nucleus. In terms of biological role, functions as a component of the PCAF complex. The PCAF complex is capable of efficiently acetylating histones in a nucleosomal context. The PCAF complex could be considered as the human version of the yeast SAGA complex. With TAF6L, acts as an epigenetic regulator essential for somatic reprogramming. Regulates target genes through H3K9ac deposition and MYC recruitment which trigger MYC regulatory network to orchestrate gene expression programs to control embryonic stem cell state. This chain is TAF5-like RNA polymerase II p300/CBP-associated factor-associated factor 65 kDa subunit 5L, found in Mus musculus (Mouse).